Here is a 798-residue protein sequence, read N- to C-terminus: Ubiquitin carboxyl-terminal hydrolase 10 (798 aa).

Ala-2 carries the post-translational modification N-acetylalanine. Positions 2 to 100 are interaction with p53/TP53; the sequence is ALHSPQYIFG…ILGCTASKIT (99 aa). The G3BP1-binding stretch occupies residues 6–21; that stretch reads PQYIFGDFSPDEFNQF. Phosphothreonine is present on Thr-24. Thr-42 is modified (phosphothreonine; by ATM). Thr-100 carries the post-translational modification Phosphothreonine. Disordered regions lie at residues 139 to 166, 194 to 257, and 307 to 337; these read GVSGGLGQRERKKKKKRPPGYYSYLKDG, AEFM…CFPA, and TESIDLDPTKPESASPPADGTGSASGTLPVS. The segment covering 205–219 has biased composition (polar residues); that stretch reads TPRTCNSPQNSTDSV. Residues Ser-211 and Ser-226 each carry the phosphoserine modification. Over residues 307–316 the composition is skewed to basic and acidic residues; sequence TESIDLDPTK. Ser-321 is modified (phosphoserine). The segment covering 328 to 337 has biased composition (polar residues); sequence GSASGTLPVS. Ser-337 bears the Phosphoserine; by ATM mark. Phosphoserine occurs at positions 365 and 370. The USP domain maps to 415–795; the sequence is RGLINKGNWC…TAYLLYYRRV (381 aa). The Nucleophile role is filled by Cys-424. At Ser-547 the chain carries Phosphoserine. The span at 551 to 562 shows a compositional bias: polar residues; sequence EKLTISNGPKNH. The disordered stretch occupies residues 551 to 594; sequence EKLTISNGPKNHSVNEEEQEEQGEGSEDEWEQVGPRNKTSVTRQ. Phosphoserine occurs at positions 563 and 576. Acidic residues predominate over residues 566–581; the sequence is EEEQEEQGEGSEDEWE. The Proton acceptor role is filled by His-749.

The protein belongs to the peptidase C19 family. USP10 subfamily. As to quaternary structure, found in a deubiquitination complex with TANK, USP10 and ZC3H12A; this complex inhibits genotoxic stress- or interleukin-1-beta (IL1B)-mediated NF-kappa-B activation by promoting IKBKG or TRAF6 deubiquitination. Interacts with IKBKG; this interaction increases in response to DNA damage. Interacts with TANK; this interaction increases in response to DNA damage. Interacts with TRAF6; this interaction increases in response to DNA damage. Interacts with ZC3H12A; this interaction increases in response to DNA damage. Interacts with G3BP1 (via NTF2 domain) and G3BP2 (via NTF2 domain); inhibiting stress granule formation. Post-translationally, phosphorylated by ATM following DNA damage, leading to stabilization and translocation it to the nucleus. In terms of processing, ubiquitinated. Deubiquitinated by USP13. Widely expressed.

Its subcellular location is the cytoplasm. The protein localises to the nucleus. It localises to the early endosome. It catalyses the reaction Thiol-dependent hydrolysis of ester, thioester, amide, peptide and isopeptide bonds formed by the C-terminal Gly of ubiquitin (a 76-residue protein attached to proteins as an intracellular targeting signal).. With respect to regulation, specifically inhibited by spautin-1 (specific and potent autophagy inhibitor-1), a derivative of MBCQ that binds to USP10 and inhibits deubiquitinase activity. Regulated by PIK3C3/VPS34-containing complexes. Hydrolase that can remove conjugated ubiquitin from target proteins such as p53/TP53, RPS2/us5, RPS3/us3, RPS10/eS10, BECN1, SNX3 and CFTR. Acts as an essential regulator of p53/TP53 stability: in unstressed cells, specifically deubiquitinates p53/TP53 in the cytoplasm, leading to counteract MDM2 action and stabilize p53/TP53. Following DNA damage, translocates to the nucleus and deubiquitinates p53/TP53, leading to regulate the p53/TP53-dependent DNA damage response. Component of a regulatory loop that controls autophagy and p53/TP53 levels: mediates deubiquitination of BECN1, a key regulator of autophagy, leading to stabilize the PIK3C3/VPS34-containing complexes. In turn, PIK3C3/VPS34-containing complexes regulate USP10 stability, suggesting the existence of a regulatory system by which PIK3C3/VPS34-containing complexes regulate p53/TP53 protein levels via USP10 and USP13. Does not deubiquitinate MDM2. Plays a key role in 40S ribosome subunit recycling when a ribosome has stalled during translation: acts both by inhibiting formation of stress granules, which store stalled translation pre-initiation complexes, and mediating deubiquitination of 40S ribosome subunits. Acts as a negative regulator of stress granules formation by lowering G3BP1 and G3BP2 valence, thereby preventing G3BP1 and G3BP2 ability to undergo liquid-liquid phase separation (LLPS) and assembly of stress granules. Promotes 40S ribosome subunit recycling following ribosome dissociation in response to ribosome stalling by mediating deubiquitination of 40S ribosomal proteins RPS2/us5, RPS3/us3 and RPS10/eS10, thereby preventing their degradation by the proteasome. Part of a ribosome quality control that takes place when ribosomes have stalled during translation initiation (iRQC): USP10 acts by removing monoubiquitination of RPS2/us5 and RPS3/us3, promoting 40S ribosomal subunit recycling. Deubiquitinates CFTR in early endosomes, enhancing its endocytic recycling. Involved in a TANK-dependent negative feedback response to attenuate NF-kappa-B activation via deubiquitinating IKBKG or TRAF6 in response to interleukin-1-beta (IL1B) stimulation or upon DNA damage. Deubiquitinates TBX21 leading to its stabilization. Plays a negative role in the RLR signaling pathway upon RNA virus infection by blocking the RIGI-mediated MAVS activation. Mechanistically, removes the unanchored 'Lys-63'-linked polyubiquitin chains of MAVS to inhibit its aggregation, essential for its activation. This is Ubiquitin carboxyl-terminal hydrolase 10 from Homo sapiens (Human).